The following is a 50-amino-acid chain: Large ribosomal subunit protein bL33 (50 aa).

Belongs to the bacterial ribosomal protein bL33 family.

This Mycoplasmopsis synoviae (strain 53) (Mycoplasma synoviae) protein is Large ribosomal subunit protein bL33.